The sequence spans 393 residues: S-adenosylmethionine synthase (393 aa).

H16 contributes to the ATP binding site. Residue D18 participates in Mg(2+) binding. E44 provides a ligand contact to K(+). L-methionine-binding residues include E57 and Q100. Residues 100–110 (QSPDIVMGVDG) form a flexible loop region. ATP is bound by residues 165-167 (DAK), 231-232 (RF), D240, 246-247 (RK), and K267. D240 is an L-methionine binding site. L-methionine is bound at residue K271.

It belongs to the AdoMet synthase family. As to quaternary structure, homotetramer; dimer of dimers. The cofactor is Mg(2+). K(+) is required as a cofactor.

The protein resides in the cytoplasm. The enzyme catalyses L-methionine + ATP + H2O = S-adenosyl-L-methionine + phosphate + diphosphate. The protein operates within amino-acid biosynthesis; S-adenosyl-L-methionine biosynthesis; S-adenosyl-L-methionine from L-methionine: step 1/1. Its function is as follows. Catalyzes the formation of S-adenosylmethionine (AdoMet) from methionine and ATP. The overall synthetic reaction is composed of two sequential steps, AdoMet formation and the subsequent tripolyphosphate hydrolysis which occurs prior to release of AdoMet from the enzyme. This chain is S-adenosylmethionine synthase, found in Coxiella burnetii (strain CbuG_Q212) (Coxiella burnetii (strain Q212)).